A 29-amino-acid chain; its full sequence is Dermaseptin-J9 (29 aa).

As to expression, expressed by the skin glands.

Its subcellular location is the secreted. Its function is as follows. Has antimicrobial activity. This is Dermaseptin-J9 from Phasmahyla jandaia (Jandaia leaf frog).